A 185-amino-acid chain; its full sequence is Ribosome-recycling factor (185 aa).

It belongs to the RRF family.

It localises to the cytoplasm. Its function is as follows. Responsible for the release of ribosomes from messenger RNA at the termination of protein biosynthesis. May increase the efficiency of translation by recycling ribosomes from one round of translation to another. The sequence is that of Ribosome-recycling factor from Myxococcus xanthus (strain DK1622).